The sequence spans 43 residues: Iota-conotoxin-like Fi11.6 (43 aa).

Disulfide bonds link C2–C16, C9–C19, C15–C24, and C18–C35. P8 is subject to 4-hydroxyproline. At P26 the chain carries 4-hydroxyproline. W30 is modified (6'-bromotryptophan). Position 41 is a D-phenylalanine (F41).

It belongs to the conotoxin I1 superfamily. As to expression, expressed by the venom duct.

The protein resides in the secreted. Its function is as follows. Iota-conotoxins bind to voltage-gated sodium channels (Nav) and act as agonists by shifting the voltage-dependence of activation to more hyperpolarized levels. Produces general excitatory symptoms. This is Iota-conotoxin-like Fi11.6 from Conus figulinus (Fig cone).